A 62-amino-acid chain; its full sequence is Large ribosomal subunit protein bL28 (62 aa).

The protein belongs to the bacterial ribosomal protein bL28 family.

The polypeptide is Large ribosomal subunit protein bL28 (Phytoplasma mali (strain AT)).